A 352-amino-acid chain; its full sequence is GTPase Obg (352 aa).

Residues 1 to 159 form the Obg domain; the sequence is MSFIDEAKVF…FPIFMQLKVL (159 aa). The OBG-type G domain maps to 160 to 327; sequence SDIGIIGMPN…VMLYEMLQKD (168 aa). GTP is bound by residues 166 to 173, 191 to 195, 212 to 215, 279 to 282, and 308 to 310; these read GMPNAGKS, FTTLE, DIPG, NKCD, and SLD. Residues serine 173 and threonine 193 each contribute to the Mg(2+) site.

The protein belongs to the TRAFAC class OBG-HflX-like GTPase superfamily. OBG GTPase family. As to quaternary structure, monomer. Mg(2+) is required as a cofactor.

The protein localises to the cytoplasm. In terms of biological role, an essential GTPase which binds GTP, GDP and possibly (p)ppGpp with moderate affinity, with high nucleotide exchange rates and a fairly low GTP hydrolysis rate. Plays a role in control of the cell cycle, stress response, ribosome biogenesis and in those bacteria that undergo differentiation, in morphogenesis control. In Anaplasma phagocytophilum (strain HZ), this protein is GTPase Obg.